The primary structure comprises 1368 residues: DNA-directed RNA polymerase subunit beta (1368 aa).

Belongs to the RNA polymerase beta chain family. As to quaternary structure, the RNAP catalytic core consists of 2 alpha, 1 beta, 1 beta' and 1 omega subunit. When a sigma factor is associated with the core the holoenzyme is formed, which can initiate transcription.

The enzyme catalyses RNA(n) + a ribonucleoside 5'-triphosphate = RNA(n+1) + diphosphate. DNA-dependent RNA polymerase catalyzes the transcription of DNA into RNA using the four ribonucleoside triphosphates as substrates. This chain is DNA-directed RNA polymerase subunit beta, found in Cupriavidus necator (strain ATCC 17699 / DSM 428 / KCTC 22496 / NCIMB 10442 / H16 / Stanier 337) (Ralstonia eutropha).